We begin with the raw amino-acid sequence, 273 residues long: Putative pyruvate, phosphate dikinase regulatory protein (273 aa).

153 to 160 (GVSRTSKT) contacts ADP.

This sequence belongs to the pyruvate, phosphate/water dikinase regulatory protein family. PDRP subfamily.

It catalyses the reaction N(tele)-phospho-L-histidyl/L-threonyl-[pyruvate, phosphate dikinase] + ADP = N(tele)-phospho-L-histidyl/O-phospho-L-threonyl-[pyruvate, phosphate dikinase] + AMP + H(+). The enzyme catalyses N(tele)-phospho-L-histidyl/O-phospho-L-threonyl-[pyruvate, phosphate dikinase] + phosphate + H(+) = N(tele)-phospho-L-histidyl/L-threonyl-[pyruvate, phosphate dikinase] + diphosphate. Bifunctional serine/threonine kinase and phosphorylase involved in the regulation of the pyruvate, phosphate dikinase (PPDK) by catalyzing its phosphorylation/dephosphorylation. The sequence is that of Putative pyruvate, phosphate dikinase regulatory protein from Sinorhizobium fredii (strain NBRC 101917 / NGR234).